Consider the following 739-residue polypeptide: Phosphoribosylformylglycinamidine synthase subunit PurL (739 aa).

Histidine 54 is an active-site residue. The ATP site is built by tyrosine 57 and lysine 96. Glutamate 98 is a binding site for Mg(2+). Substrate is bound by residues 99–102 (SHNH) and arginine 121. Catalysis depends on histidine 100, which acts as the Proton acceptor. Aspartate 122 contacts Mg(2+). Residue glutamine 245 participates in substrate binding. Aspartate 275 is a binding site for Mg(2+). 319–321 (ESQ) lines the substrate pocket. Residues aspartate 504 and glycine 541 each contribute to the ATP site. Asparagine 542 serves as a coordination point for Mg(2+). A substrate-binding site is contributed by serine 544.

It belongs to the FGAMS family. Monomer. Part of the FGAM synthase complex composed of 1 PurL, 1 PurQ and 2 PurS subunits.

The protein localises to the cytoplasm. The catalysed reaction is N(2)-formyl-N(1)-(5-phospho-beta-D-ribosyl)glycinamide + L-glutamine + ATP + H2O = 2-formamido-N(1)-(5-O-phospho-beta-D-ribosyl)acetamidine + L-glutamate + ADP + phosphate + H(+). It functions in the pathway purine metabolism; IMP biosynthesis via de novo pathway; 5-amino-1-(5-phospho-D-ribosyl)imidazole from N(2)-formyl-N(1)-(5-phospho-D-ribosyl)glycinamide: step 1/2. Functionally, part of the phosphoribosylformylglycinamidine synthase complex involved in the purines biosynthetic pathway. Catalyzes the ATP-dependent conversion of formylglycinamide ribonucleotide (FGAR) and glutamine to yield formylglycinamidine ribonucleotide (FGAM) and glutamate. The FGAM synthase complex is composed of three subunits. PurQ produces an ammonia molecule by converting glutamine to glutamate. PurL transfers the ammonia molecule to FGAR to form FGAM in an ATP-dependent manner. PurS interacts with PurQ and PurL and is thought to assist in the transfer of the ammonia molecule from PurQ to PurL. This chain is Phosphoribosylformylglycinamidine synthase subunit PurL, found in Lactococcus lactis subsp. lactis (strain IL1403) (Streptococcus lactis).